Consider the following 209-residue polypeptide: Small ribosomal subunit protein uS5 (209 aa).

Residues 1-11 (MTQPNTQTTPN) show a composition bias toward polar residues. The interval 1–55 (MTQPNTQTTPNDVPAAAEGQQEQQQQQRRGGGRERRGGGRRGDRRGQERDSEWQE) is disordered. The span at 18 to 28 (EGQQEQQQQQR) shows a compositional bias: low complexity. Basic and acidic residues predominate over residues 31-55 (GGRERRGGGRRGDRRGQERDSEWQE). The S5 DRBM domain maps to 53-116 (WQERVVQIRR…ADGKKHLVKV (64 aa)).

This sequence belongs to the universal ribosomal protein uS5 family. In terms of assembly, part of the 30S ribosomal subunit. Contacts proteins S4 and S8.

With S4 and S12 plays an important role in translational accuracy. In terms of biological role, located at the back of the 30S subunit body where it stabilizes the conformation of the head with respect to the body. The protein is Small ribosomal subunit protein uS5 of Prochlorococcus marinus (strain MIT 9313).